The sequence spans 195 residues: Morphogenetic protein (195 aa).

Its function is as follows. Assembly factor active in membrane morphogenesis. The protein is Morphogenetic protein (P12) of Pseudomonas phage phi6 (Bacteriophage phi-6).